Consider the following 203-residue polypeptide: uncharacterized protein (203 aa).

Positions M1–A31 are cleaved as a signal peptide.

This is an uncharacterized protein from Bacillus subtilis (strain 168).